The primary structure comprises 179 residues: Large ribosomal subunit protein uL6 (179 aa).

The protein belongs to the universal ribosomal protein uL6 family. As to quaternary structure, part of the 50S ribosomal subunit.

Its function is as follows. This protein binds to the 23S rRNA, and is important in its secondary structure. It is located near the subunit interface in the base of the L7/L12 stalk, and near the tRNA binding site of the peptidyltransferase center. The protein is Large ribosomal subunit protein uL6 of Pelodictyon phaeoclathratiforme (strain DSM 5477 / BU-1).